We begin with the raw amino-acid sequence, 228 residues long: 2-C-methyl-D-erythritol 4-phosphate cytidylyltransferase (228 aa).

This sequence belongs to the IspD/TarI cytidylyltransferase family. IspD subfamily.

The enzyme catalyses 2-C-methyl-D-erythritol 4-phosphate + CTP + H(+) = 4-CDP-2-C-methyl-D-erythritol + diphosphate. The protein operates within isoprenoid biosynthesis; isopentenyl diphosphate biosynthesis via DXP pathway; isopentenyl diphosphate from 1-deoxy-D-xylulose 5-phosphate: step 2/6. Its function is as follows. Catalyzes the formation of 4-diphosphocytidyl-2-C-methyl-D-erythritol from CTP and 2-C-methyl-D-erythritol 4-phosphate (MEP). The protein is 2-C-methyl-D-erythritol 4-phosphate cytidylyltransferase of Halalkalibacterium halodurans (strain ATCC BAA-125 / DSM 18197 / FERM 7344 / JCM 9153 / C-125) (Bacillus halodurans).